The primary structure comprises 86 residues: Acyl carrier protein (86 aa).

In terms of domain architecture, Carrier spans 2-82 (ATVFERVKKV…AVVDYLKSKG (81 aa)). At Ser37 the chain carries O-(pantetheine 4'-phosphoryl)serine.

The protein belongs to the acyl carrier protein (ACP) family. In terms of processing, 4'-phosphopantetheine is transferred from CoA to a specific serine of apo-ACP by AcpS. This modification is essential for activity because fatty acids are bound in thioester linkage to the sulfhydryl of the prosthetic group.

The protein resides in the cytoplasm. The protein operates within lipid metabolism; fatty acid biosynthesis. Functionally, carrier of the growing fatty acid chain in fatty acid biosynthesis. The chain is Acyl carrier protein from Dehalococcoides mccartyi (strain ATCC BAA-2100 / JCM 16839 / KCTC 5957 / BAV1).